Consider the following 97-residue polypeptide: MTTKVITAEDVRKVAHLARLAIDESEIEALTQQLDSILDYVNQLSELDVTEVPPTTRAIEVSNVTRPDVLAPWPNREDLLAIAPEREDDFFRVPKIM.

The protein belongs to the GatC family. In terms of assembly, heterotrimer of A, B and C subunits.

The catalysed reaction is L-glutamyl-tRNA(Gln) + L-glutamine + ATP + H2O = L-glutaminyl-tRNA(Gln) + L-glutamate + ADP + phosphate + H(+). The enzyme catalyses L-aspartyl-tRNA(Asn) + L-glutamine + ATP + H2O = L-asparaginyl-tRNA(Asn) + L-glutamate + ADP + phosphate + 2 H(+). Allows the formation of correctly charged Asn-tRNA(Asn) or Gln-tRNA(Gln) through the transamidation of misacylated Asp-tRNA(Asn) or Glu-tRNA(Gln) in organisms which lack either or both of asparaginyl-tRNA or glutaminyl-tRNA synthetases. The reaction takes place in the presence of glutamine and ATP through an activated phospho-Asp-tRNA(Asn) or phospho-Glu-tRNA(Gln). The chain is Aspartyl/glutamyl-tRNA(Asn/Gln) amidotransferase subunit C from Thermosynechococcus vestitus (strain NIES-2133 / IAM M-273 / BP-1).